The chain runs to 269 residues: Sulfur carrier protein FdhD (269 aa).

The Cysteine persulfide intermediate role is filled by Cys-111.

This sequence belongs to the FdhD family.

It is found in the cytoplasm. In terms of biological role, required for formate dehydrogenase (FDH) activity. Acts as a sulfur carrier protein that transfers sulfur from IscS to the molybdenum cofactor prior to its insertion into FDH. The chain is Sulfur carrier protein FdhD from Brucella melitensis biotype 1 (strain ATCC 23456 / CCUG 17765 / NCTC 10094 / 16M).